We begin with the raw amino-acid sequence, 196 residues long: Molybdenum cofactor guanylyltransferase (196 aa).

GTP-binding positions include 10 to 12, lysine 23, asparagine 51, aspartate 69, and aspartate 99; that span reads LAG. Residue aspartate 99 participates in Mg(2+) binding.

The protein belongs to the MobA family. In terms of assembly, monomer. It depends on Mg(2+) as a cofactor.

It localises to the cytoplasm. The catalysed reaction is Mo-molybdopterin + GTP + H(+) = Mo-molybdopterin guanine dinucleotide + diphosphate. Its function is as follows. Transfers a GMP moiety from GTP to Mo-molybdopterin (Mo-MPT) cofactor (Moco or molybdenum cofactor) to form Mo-molybdopterin guanine dinucleotide (Mo-MGD) cofactor. This Shewanella woodyi (strain ATCC 51908 / MS32) protein is Molybdenum cofactor guanylyltransferase.